The following is a 243-amino-acid chain: UPF0246 protein M6_Spy1787 (243 aa).

This sequence belongs to the UPF0246 family.

The chain is UPF0246 protein M6_Spy1787 from Streptococcus pyogenes serotype M6 (strain ATCC BAA-946 / MGAS10394).